Reading from the N-terminus, the 323-residue chain is RNA polymerase II holoenzyme cyclin-like subunit (323 aa).

In terms of domain architecture, Cyclin N-terminal spans 45-176 (DSKQNGIEQS…LLEELESYLI (132 aa)).

It belongs to the cyclin family. Cyclin C subfamily. Component of the SRB8-11 complex which consists of SRB8, SSN2/SRB9, SSN3/SRB10 and SSN8/SRB11. The SRB8-11 complex associates with the Mediator complex. The SSN3/SRB10 and SSN8/SRB11 kinase-cyclin pair also associate with the RNA polymerase II holoenzyme. Interacts with ASK10.

The protein resides in the nucleus. In terms of biological role, component of the SRB8-11 complex. The SRB8-11 complex is a regulatory module of the Mediator complex which is itself involved in regulation of basal and activated RNA polymerase II-dependent transcription. The SRB8-11 complex may be involved in the transcriptional repression of a subset of genes regulated by Mediator. It may inhibit the association of the Mediator complex with RNA polymerase II to form the holoenzyme complex. The SRB8-11 complex phosphorylates the C-terminal domain (CTD) of the largest subunit of RNA polymerase II RPB1 at serines 2 and 5. The SSN3/SRB10 and SSN8/SRB11 kinase-cyclin pair may also positively and negatively regulate numerous transcriptional activators in response to changes in nutritional and physiological conditions. The polypeptide is RNA polymerase II holoenzyme cyclin-like subunit (SSN8) (Saccharomyces cerevisiae (strain ATCC 204508 / S288c) (Baker's yeast)).